Consider the following 595-residue polypeptide: NADH-quinone oxidoreductase subunit C/D (595 aa).

An NADH dehydrogenase I subunit C region spans residues 1 to 185 (MNKNICLSAS…NPFVLTKEKE (185 aa)). The tract at residues 209 to 595 (DFMFLNFGPN…IDFVMSDVDR (387 aa)) is NADH dehydrogenase I subunit D.

This sequence in the N-terminal section; belongs to the complex I 30 kDa subunit family. It in the C-terminal section; belongs to the complex I 49 kDa subunit family. NDH-1 is composed of 13 different subunits. Subunits NuoB, CD, E, F, and G constitute the peripheral sector of the complex.

It is found in the cell inner membrane. The enzyme catalyses a quinone + NADH + 5 H(+)(in) = a quinol + NAD(+) + 4 H(+)(out). NDH-1 shuttles electrons from NADH, via FMN and iron-sulfur (Fe-S) centers, to quinones in the respiratory chain. The immediate electron acceptor for the enzyme in this species is believed to be ubiquinone. Couples the redox reaction to proton translocation (for every two electrons transferred, four hydrogen ions are translocated across the cytoplasmic membrane), and thus conserves the redox energy in a proton gradient. This chain is NADH-quinone oxidoreductase subunit C/D, found in Baumannia cicadellinicola subsp. Homalodisca coagulata.